The following is a 304-amino-acid chain: Probable UDP-3-O-acylglucosamine N-acyltransferase 2, mitochondrial (304 aa).

The transit peptide at 1–47 (MAATLWRLYSKSICNSLQGIILNKPFIQKQLLLSSRTRSLSFSSDSQ) directs the protein to the mitochondrion. Position 159-161 (159-161 (FGF)) interacts with UDP-N-acetyl-alpha-D-glucosamine. Residues aspartate 209 and glutamine 213 each coordinate hexadecanoate. The Proton acceptor role is filled by histidine 216. Residues asparagine 217, serine 235, and histidine 253 each coordinate UDP-N-acetyl-alpha-D-glucosamine.

The protein belongs to the transferase hexapeptide repeat family. LpxD subfamily. Homotrimer.

The protein resides in the mitochondrion. The enzyme catalyses a UDP-3-O-[(3R)-3-hydroxyacyl]-alpha-D-glucosamine + a (3R)-hydroxyacyl-[ACP] = a UDP-2-N,3-O-bis[(3R)-3-hydroxyacyl]-alpha-D-glucosamine + holo-[ACP] + H(+). The protein operates within glycolipid biosynthesis; lipid IV(A) biosynthesis; lipid IV(A) from (3R)-3-hydroxytetradecanoyl-[acyl-carrier-protein] and UDP-N-acetyl-alpha-D-glucosamine: step 3/6. Its function is as follows. Involved in the biosynthesis of lipid A, a phosphorylated glycolipid that in bacteria anchors the lipopolysaccharide to the outer membrane of the cell. Lipid A-like molecules in plants may serve as structural components of the outer membranes of mitochondria and/or chloroplasts, or may be involved in signal transduction or plant defense responses. The sequence is that of Probable UDP-3-O-acylglucosamine N-acyltransferase 2, mitochondrial (LPXD2) from Arabidopsis thaliana (Mouse-ear cress).